The primary structure comprises 79 residues: Toxin 3FTx-Oxy5 (79 aa).

A signal peptide spans 1–23 (MKTLLLTLVVMTIVCLDLGYTLT). 4 disulfide bridges follow: Cys24/Cys41, Cys34/Cys59, Cys63/Cys71, and Cys72/Cys77.

Belongs to the three-finger toxin family. Short-chain subfamily. In terms of tissue distribution, expressed by the venom gland.

It localises to the secreted. This Oxyuranus microlepidotus (Inland taipan) protein is Toxin 3FTx-Oxy5.